Reading from the N-terminus, the 297-residue chain is Carboxysome assembly protein CcmO (297 aa).

Positions 1–29 (MPTSPTMTSVPIARSPRPSYQQINQHQPS) are disordered. The segment covering 18-29 (PSYQQINQHQPS) has biased composition (polar residues). BMC domains follow at residues 32-116 (ALGL…AVFP) and 138-222 (SIGL…HTLP).

Belongs to the bacterial microcompartments protein family. In terms of assembly, homooligomerizes, possibly as a trimer, interacts with CcmK in the carboxysome.

It localises to the carboxysome. Required for formation of the carboxysome, a polyhedral inclusion where RuBisCO (ribulose bisphosphate carboxylase, rbcL-rbcS) is sequestered. Required for recruitment of major shell protein CcmK2 to the pre-carboxysome. Suggested to be a carboxysome shell protein. This chain is Carboxysome assembly protein CcmO, found in Synechocystis sp. (strain ATCC 27184 / PCC 6803 / Kazusa).